The sequence spans 206 residues: Thiamine-phosphate synthase (206 aa).

4-amino-2-methyl-5-(diphosphooxymethyl)pyrimidine contacts are provided by residues Gln33–Lys37 and Asn65. Asp66 and Asp85 together coordinate Mg(2+). Residue Thr104 coordinates 4-amino-2-methyl-5-(diphosphooxymethyl)pyrimidine. Thr130 to Thr132 is a 2-[(2R,5Z)-2-carboxy-4-methylthiazol-5(2H)-ylidene]ethyl phosphate binding site. 4-amino-2-methyl-5-(diphosphooxymethyl)pyrimidine is bound at residue Lys133. Gly166 lines the 2-[(2R,5Z)-2-carboxy-4-methylthiazol-5(2H)-ylidene]ethyl phosphate pocket.

The protein belongs to the thiamine-phosphate synthase family. Mg(2+) is required as a cofactor.

It carries out the reaction 2-[(2R,5Z)-2-carboxy-4-methylthiazol-5(2H)-ylidene]ethyl phosphate + 4-amino-2-methyl-5-(diphosphooxymethyl)pyrimidine + 2 H(+) = thiamine phosphate + CO2 + diphosphate. It catalyses the reaction 2-(2-carboxy-4-methylthiazol-5-yl)ethyl phosphate + 4-amino-2-methyl-5-(diphosphooxymethyl)pyrimidine + 2 H(+) = thiamine phosphate + CO2 + diphosphate. The catalysed reaction is 4-methyl-5-(2-phosphooxyethyl)-thiazole + 4-amino-2-methyl-5-(diphosphooxymethyl)pyrimidine + H(+) = thiamine phosphate + diphosphate. Its pathway is cofactor biosynthesis; thiamine diphosphate biosynthesis; thiamine phosphate from 4-amino-2-methyl-5-diphosphomethylpyrimidine and 4-methyl-5-(2-phosphoethyl)-thiazole: step 1/1. Its function is as follows. Condenses 4-methyl-5-(beta-hydroxyethyl)thiazole monophosphate (THZ-P) and 2-methyl-4-amino-5-hydroxymethyl pyrimidine pyrophosphate (HMP-PP) to form thiamine monophosphate (TMP). This Flavobacterium psychrophilum (strain ATCC 49511 / DSM 21280 / CIP 103535 / JIP02/86) protein is Thiamine-phosphate synthase.